A 130-amino-acid polypeptide reads, in one-letter code: Protein ApaG (130 aa).

Residues 3 to 127 form the ApaG domain; it reads EHESCGVRIS…FSLDRPSDRL (125 aa).

This is Protein ApaG from Maricaulis maris (strain MCS10) (Caulobacter maris).